The following is a 71-amino-acid chain: UPF0435 protein BPUM_0734 (71 aa).

It belongs to the UPF0435 family.

This chain is UPF0435 protein BPUM_0734, found in Bacillus pumilus (strain SAFR-032).